The following is a 104-amino-acid chain: MKVHVRKNDTVVVISGKDKGKTGEVLRVIPKTGKVVVKGVNLVKKHQKPNRQNMQGGIIEMEAAINSSKVMLFCEKCKKATRISHKLLENGAKVRVCKKCGETF.

This sequence belongs to the universal ribosomal protein uL24 family. Part of the 50S ribosomal subunit.

One of two assembly initiator proteins, it binds directly to the 5'-end of the 23S rRNA, where it nucleates assembly of the 50S subunit. Functionally, one of the proteins that surrounds the polypeptide exit tunnel on the outside of the subunit. This is Large ribosomal subunit protein uL24 from Clostridium perfringens (strain SM101 / Type A).